A 215-amino-acid polypeptide reads, in one-letter code: Probable phosphoglycerate mutase GpmB (215 aa).

Residues 8–15 (RHGETQWN), 21–22 (QG), R58, K60, 82–85 (ELDM), 104–105 (RR), and 151–152 (GI) contribute to the substrate site. H9 functions as the Tele-phosphohistidine intermediate in the catalytic mechanism. E82 (proton donor/acceptor) is an active-site residue.

It belongs to the phosphoglycerate mutase family. GpmB subfamily.

It catalyses the reaction (2R)-2-phosphoglycerate = (2R)-3-phosphoglycerate. It functions in the pathway carbohydrate degradation; glycolysis; pyruvate from D-glyceraldehyde 3-phosphate: step 3/5. This Salmonella choleraesuis (strain SC-B67) protein is Probable phosphoglycerate mutase GpmB.